A 180-amino-acid chain; its full sequence is Non-structural protein 4 (180 aa).

The next 2 membrane-spanning stretches (helical) occupy residues 16–36 (VCVH…VTVI) and 52–72 (IVST…AILG).

It is found in the host membrane. The polypeptide is Non-structural protein 4 (Segment-11) (Banna virus (BAV)).